The sequence spans 283 residues: Undecaprenyl-diphosphatase (283 aa).

Helical transmembrane passes span 1 to 21 (MDIIQAIVLGIIQGLTEFLPI), 40 to 60 (GAAFTAIIQIGTLAAVLIYFY), 85 to 105 (SRMGWMISAGTIPIVVLGLLF), 117 to 137 (YIISGSLILLALVLMYAEYLV), 196 to 216 (FSFLLSLPAVFAAGVYQLLKV), 232 to 252 (VATVVSGVIGYASIAFLLDYL), and 258 to 278 (YLFIIYRILLGVFLLAMLSMG).

This sequence belongs to the UppP family.

The protein resides in the cell inner membrane. The catalysed reaction is di-trans,octa-cis-undecaprenyl diphosphate + H2O = di-trans,octa-cis-undecaprenyl phosphate + phosphate + H(+). Catalyzes the dephosphorylation of undecaprenyl diphosphate (UPP). Confers resistance to bacitracin. This is Undecaprenyl-diphosphatase from Chloroherpeton thalassium (strain ATCC 35110 / GB-78).